The sequence spans 161 residues: Small ribosomal subunit protein uS15 (161 aa).

A compositionally biased stretch (basic residues) spans 1–13; the sequence is MAGKRRKKGRSHS. Residues 1-22 form a disordered region; that stretch reads MAGKRRKKGRSHSTRPATPTVP.

This sequence belongs to the universal ribosomal protein uS15 family. Part of the 30S ribosomal subunit.

This is Small ribosomal subunit protein uS15 from Hyperthermus butylicus (strain DSM 5456 / JCM 9403 / PLM1-5).